A 443-amino-acid polypeptide reads, in one-letter code: F-box/LRR-repeat protein At2g42720 (443 aa).

In terms of domain architecture, F-box spans 1–47 (MDRISSLPDEILEHILSFLSTKEAALTSSLSTRWKNVFVFVPSLHLD). LRR repeat units lie at residues 139 to 167 (KLRL…CLDT), 169 to 194 (DFDG…VLED), 201 to 236 (CGSV…ELSC), 271 to 296 (SSHL…HLTS), 323 to 348 (DKKQ…VFKG), and 363 to 389 (CSGI…SYQG).

The sequence is that of F-box/LRR-repeat protein At2g42720 from Arabidopsis thaliana (Mouse-ear cress).